A 128-amino-acid chain; its full sequence is RxLR effector protein SFI2 (128 aa).

Positions 1–22 are cleaved as a signal peptide; that stretch reads MRSAFYIFLVVAVLARCSVVAA. A RxLR-dEER motif is present at residues 52 to 71; sequence RLLRVAGREDDDATTDEEDR.

This sequence belongs to the RxLR effector family.

It localises to the secreted. Its subcellular location is the host nucleus. Effector that suppresses flg22-induced post-translational MAP kinase activation both tomato and Arabidopsis. The perception of highly conserved pathogen- or microbe-associated molecular patterns (PAMPs/MAMPs), such as flg22, triggers converging signaling pathways recruiting MAP kinase cascades and inducing transcriptional re-programming, yielding a generic antimicrobial response. The chain is RxLR effector protein SFI2 from Phytophthora infestans (strain T30-4) (Potato late blight agent).